The sequence spans 386 residues: GTPase Obg (386 aa).

Residues 1-159 (MKFIDEARIE…RTLKLELKVL (159 aa)) enclose the Obg domain. An OBG-type G domain is found at 160–348 (ADVGLLGMPN…LTFAIMSYLD (189 aa)). Residues 166–173 (GMPNAGKS), 191–195 (FTTLH), 213–216 (DIPG), 284–287 (NKVD), and 329–331 (SAL) each bind GTP. 2 residues coordinate Mg(2+): S173 and T193.

It belongs to the TRAFAC class OBG-HflX-like GTPase superfamily. OBG GTPase family. In terms of assembly, monomer. It depends on Mg(2+) as a cofactor.

The protein resides in the cytoplasm. An essential GTPase which binds GTP, GDP and possibly (p)ppGpp with moderate affinity, with high nucleotide exchange rates and a fairly low GTP hydrolysis rate. Plays a role in control of the cell cycle, stress response, ribosome biogenesis and in those bacteria that undergo differentiation, in morphogenesis control. This is GTPase Obg from Chromobacterium violaceum (strain ATCC 12472 / DSM 30191 / JCM 1249 / CCUG 213 / NBRC 12614 / NCIMB 9131 / NCTC 9757 / MK).